Consider the following 502-residue polypeptide: Maturase K (502 aa).

This sequence belongs to the intron maturase 2 family. MatK subfamily.

The protein localises to the plastid. It localises to the chloroplast. In terms of biological role, usually encoded in the trnK tRNA gene intron. Probably assists in splicing its own and other chloroplast group II introns. This chain is Maturase K, found in Sisymbrium irio (London rocket).